A 106-amino-acid polypeptide reads, in one-letter code: MTTSELIERINKLIDVVDKAINKREFYPPRLTKYETARIIGARALQLAMGAQPLVDIQEVGSVDPVLIAMEELRRGLLDFIIVREMPDGKTMRIRLKELLELERTL.

This sequence belongs to the archaeal Rpo6/eukaryotic RPB6 RNA polymerase subunit family. In terms of assembly, part of the RNA polymerase complex.

Its subcellular location is the cytoplasm. It catalyses the reaction RNA(n) + a ribonucleoside 5'-triphosphate = RNA(n+1) + diphosphate. Functionally, DNA-dependent RNA polymerase (RNAP) catalyzes the transcription of DNA into RNA using the four ribonucleoside triphosphates as substrates. The protein is DNA-directed RNA polymerase subunit Rpo6 of Pyrobaculum aerophilum (strain ATCC 51768 / DSM 7523 / JCM 9630 / CIP 104966 / NBRC 100827 / IM2).